The chain runs to 473 residues: Kremen protein 1 (473 aa).

An N-terminal signal peptide occupies residues Met-1–Ala-19. Topologically, residues Arg-21–Thr-392 are extracellular. The region spanning Glu-31 to Cys-114 is the Kringle domain. Cystine bridges form between Cys-32-Cys-114, Cys-55-Cys-95, Cys-84-Cys-109, Cys-122-Cys-186, Cys-147-Cys-167, Cys-151-Cys-169, Cys-190-Cys-198, and Cys-214-Cys-240. An N-linked (GlcNAc...) asparagine glycan is attached at Asn-59. The WSC domain occupies Met-116–Leu-210. Residues Cys-214–Thr-321 form the CUB domain. 5 N-linked (GlcNAc...) asparagine glycosylation sites follow: Asn-217, Asn-255, Asn-293, Asn-333, and Asn-345. The chain crosses the membrane as a helical span at residues Val-393–Leu-413. The Cytoplasmic portion of the chain corresponds to His-414–Asp-473. Residues His-414–Asp-473 form an essential for apoptotic activity region.

In terms of assembly, forms a ternary complex with DKK1 and LRP6. Interacts with LRP6 in a DKK1-dependent manner. Interacts with DKK1 and RSPO1 (via FU repeats).

It localises to the cell membrane. Receptor for Dickkopf proteins. Cooperates with DKK1/2 to inhibit Wnt/beta-catenin signaling by promoting the endocytosis of Wnt receptors LRP5 and LRP6. In the absence of DKK1, potentiates Wnt-beta-catenin signaling by maintaining LRP5 or LRP6 at the cell membrane. Can trigger apoptosis in a Wnt-independent manner and this apoptotic activity is inhibited upon binding of the ligand DKK1. Plays a role in limb development; attenuates Wnt signaling in the developing limb to allow normal limb patterning and can also negatively regulate bone formation. Modulates cell fate decisions in the developing cochlea with an inhibitory role in hair cell fate specification. The sequence is that of Kremen protein 1 (Kremen1) from Rattus norvegicus (Rat).